The following is a 208-amino-acid chain: Uracil phosphoribosyltransferase (208 aa).

Residues Arg-78, Arg-103, and 130 to 138 (DPMLATGGS) each bind 5-phospho-alpha-D-ribose 1-diphosphate. Residues Ile-193 and 198–200 (GDA) contribute to the uracil site. Asp-199 is a 5-phospho-alpha-D-ribose 1-diphosphate binding site.

It belongs to the UPRTase family. Mg(2+) serves as cofactor.

It carries out the reaction UMP + diphosphate = 5-phospho-alpha-D-ribose 1-diphosphate + uracil. It functions in the pathway pyrimidine metabolism; UMP biosynthesis via salvage pathway; UMP from uracil: step 1/1. With respect to regulation, allosterically activated by GTP. Catalyzes the conversion of uracil and 5-phospho-alpha-D-ribose 1-diphosphate (PRPP) to UMP and diphosphate. The protein is Uracil phosphoribosyltransferase of Enterobacter sp. (strain 638).